The sequence spans 254 residues: Capsid protein (254 aa).

Residues 1-12 (MRKYTRNTYTMS) are compositionally biased toward polar residues. The disordered stretch occupies residues 1 to 38 (MRKYTRNTYTMSQKRKVNPQSAWPKKRRTSTTSRKYQW). Positions 10 to 35 (TMSQKRKVNPQSAWPKKRRTSTTSRK) match the Bipartite nuclear localization signal motif.

The protein belongs to the geminiviridae capsid protein family. As to quaternary structure, homomultimer. Binds to single-stranded and double-stranded viral DNA. Interacts (via nuclear localization signal) with host importin alpha-1a.

The protein resides in the virion. It localises to the host nucleus. In terms of biological role, encapsidates the viral genome into characteristic twinned ('geminate') particles. Binds the genomic viral ssDNA and shuttles it into and out of the cell nucleus. Plays a role in protection of the genome from degradation, virus acquisition and transmission by insect vectors, infectivity, and systemic movement. The CP of monopartite geminiviruses is absolutely essential for virus movement. This Beet curly top virus (strain California/Logan) (BCTV) protein is Capsid protein.